Here is a 287-residue protein sequence, read N- to C-terminus: Large ribosomal subunit protein uL2 (287 aa).

The segment at 221–287 (RGSVMNPCDH…SKRSRGGRDS (67 aa)) is disordered. Residues 258–287 (KTRKKNKPSNKLVVRRRRRISKRSRGGRDS) show a composition bias toward basic residues.

This sequence belongs to the universal ribosomal protein uL2 family. Part of the 50S ribosomal subunit. Forms a bridge to the 30S subunit in the 70S ribosome.

Its function is as follows. One of the primary rRNA binding proteins. Required for association of the 30S and 50S subunits to form the 70S ribosome, for tRNA binding and peptide bond formation. It has been suggested to have peptidyltransferase activity; this is somewhat controversial. Makes several contacts with the 16S rRNA in the 70S ribosome. The sequence is that of Large ribosomal subunit protein uL2 from Prochlorococcus marinus subsp. pastoris (strain CCMP1986 / NIES-2087 / MED4).